The primary structure comprises 586 residues: Asparagine synthetase [glutamine-hydrolyzing] 2 (586 aa).

C2 functions as the For GATase activity in the catalytic mechanism. One can recognise a Glutamine amidotransferase type-2 domain in the interval 2 to 185 (CGILAVLGCS…PGHLYSSKEK (184 aa)). L-glutamine-binding positions include 50–54 (RLAIV), 75–77 (NGE), and D98. Residues 193–516 (PPWFSEAIPS…PQNSARLSVP (324 aa)) enclose the Asparagine synthetase domain. Residues L231, V267, and 341-342 (SG) each bind ATP.

The enzyme catalyses L-aspartate + L-glutamine + ATP + H2O = L-asparagine + L-glutamate + AMP + diphosphate + H(+). The protein operates within amino-acid biosynthesis; L-asparagine biosynthesis; L-asparagine from L-aspartate (L-Gln route): step 1/1. The protein is Asparagine synthetase [glutamine-hydrolyzing] 2 (AS2) of Lotus japonicus (Lotus corniculatus var. japonicus).